Reading from the N-terminus, the 225-residue chain is Techylectin-like protein (225 aa).

Residues 32–225 (CPSPPLPIDC…WTEIKIKDVK (194 aa)) enclose the Fibrinogen C-terminal domain. A disulfide bridge links cysteine 41 with cysteine 60. A Cell attachment site motif is present at residues 75–77 (RGD). Ca(2+)-binding residues include aspartate 164 and threonine 170. Residues cysteine 172 and cysteine 185 are joined by a disulfide bond.

In terms of tissue distribution, expressed by the venom gland.

The protein resides in the secreted. In terms of biological role, lectin involved in innate immunity. The sequence is that of Techylectin-like protein from Phoneutria nigriventer (Brazilian armed spider).